A 39-amino-acid chain; its full sequence is Omega-theraphotoxin-Ba1a (39 aa).

Cystine bridges form between Cys-4/Cys-25, Cys-8/Cys-31, and Cys-17/Cys-36.

The protein belongs to the neurotoxin 12 (Hwtx-2) family. 06 (TXP1) subfamily. Expressed by the venom gland.

It is found in the secreted. Its function is as follows. Inhibits voltage-gated calcium channels (Cav) in rat cerebellar granule cells. Has insecticidal activity to crickets (Acheta domesticus). Is not toxic to mice. The sequence is that of Omega-theraphotoxin-Ba1a from Brachypelma albiceps (Mexican golden redrump tarantula).